Reading from the N-terminus, the 281-residue chain is Probable feruloyl esterase A (281 aa).

Positions 1-21 (MKQFSAKFALALSAAAGQALA) are cleaved as a signal peptide. 3 cysteine pairs are disulfide-bonded: cysteine 50–cysteine 279, cysteine 112–cysteine 115, and cysteine 248–cysteine 255. A substrate-binding site is contributed by aspartate 98. Asparagine 100 carries N-linked (GlcNAc...) asparagine glycosylation. Residue tyrosine 101 coordinates substrate. The Nucleophile role is filled by serine 154. An N-linked (GlcNAc...) asparagine glycan is attached at asparagine 173. Aspartate 215 acts as the Charge relay system in catalysis. Position 268 (histidine 268) interacts with substrate. The active-site Charge relay system is the histidine 268.

The protein belongs to the AB hydrolase superfamily. FaeA family.

It is found in the secreted. The catalysed reaction is feruloyl-polysaccharide + H2O = ferulate + polysaccharide.. Functionally, involved in degradation of plant cell walls. Hydrolyzes the feruloyl-arabinose ester bond in arabinoxylans, and the feruloyl-galactose ester bond in pectin. The protein is Probable feruloyl esterase A (faeA) of Aspergillus terreus (strain NIH 2624 / FGSC A1156).